The chain runs to 320 residues: Thymidylate synthase (320 aa).

DUMP-binding positions include arginine 27 and 182–183; that span reads RR. Cysteine 202 acts as the Nucleophile in catalysis. DUMP is bound by residues 222-225, asparagine 233, and 263-265; these read RSAD and HIY. A (6R)-5,10-methylene-5,6,7,8-tetrahydrofolate-binding site is contributed by aspartate 225. Alanine 319 lines the (6R)-5,10-methylene-5,6,7,8-tetrahydrofolate pocket.

This sequence belongs to the thymidylate synthase family. Bacterial-type ThyA subfamily. As to quaternary structure, homodimer.

It is found in the cytoplasm. It carries out the reaction dUMP + (6R)-5,10-methylene-5,6,7,8-tetrahydrofolate = 7,8-dihydrofolate + dTMP. The protein operates within pyrimidine metabolism; dTTP biosynthesis. Functionally, catalyzes the reductive methylation of 2'-deoxyuridine-5'-monophosphate (dUMP) to 2'-deoxythymidine-5'-monophosphate (dTMP) while utilizing 5,10-methylenetetrahydrofolate (mTHF) as the methyl donor and reductant in the reaction, yielding dihydrofolate (DHF) as a by-product. This enzymatic reaction provides an intracellular de novo source of dTMP, an essential precursor for DNA biosynthesis. The sequence is that of Thymidylate synthase from Limosilactobacillus reuteri (strain DSM 20016) (Lactobacillus reuteri).